Here is a 368-residue protein sequence, read N- to C-terminus: UDP-N-acetylglucosamine--N-acetylmuramyl-(pentapeptide) pyrophosphoryl-undecaprenol N-acetylglucosamine transferase (368 aa).

Residues Thr10–Gly12, Asn124, Ser196, Ile251, and Gln296 contribute to the UDP-N-acetyl-alpha-D-glucosamine site.

This sequence belongs to the glycosyltransferase 28 family. MurG subfamily.

The protein localises to the cell membrane. The catalysed reaction is Mur2Ac(oyl-L-Ala-gamma-D-Glu-L-Lys-D-Ala-D-Ala)-di-trans,octa-cis-undecaprenyl diphosphate + UDP-N-acetyl-alpha-D-glucosamine = beta-D-GlcNAc-(1-&gt;4)-Mur2Ac(oyl-L-Ala-gamma-D-Glu-L-Lys-D-Ala-D-Ala)-di-trans,octa-cis-undecaprenyl diphosphate + UDP + H(+). The protein operates within cell wall biogenesis; peptidoglycan biosynthesis. Its function is as follows. Cell wall formation. Catalyzes the transfer of a GlcNAc subunit on undecaprenyl-pyrophosphoryl-MurNAc-pentapeptide (lipid intermediate I) to form undecaprenyl-pyrophosphoryl-MurNAc-(pentapeptide)GlcNAc (lipid intermediate II). This Limosilactobacillus fermentum (strain NBRC 3956 / LMG 18251) (Lactobacillus fermentum) protein is UDP-N-acetylglucosamine--N-acetylmuramyl-(pentapeptide) pyrophosphoryl-undecaprenol N-acetylglucosamine transferase.